A 314-amino-acid chain; its full sequence is Annexin-like protein RJ4 (314 aa).

Annexin repeat units lie at residues 10-81 (FCAK…RWTL), 82-153 (DPAD…ALVT), 165-236 (KLAN…TAIR), and 240-311 (DPKK…TLLG). Ca(2+)-binding residues include Gly-25, Gly-27, and Glu-67. Ile-253, Arg-255, Gly-257, Asp-297, and Thr-298 together coordinate Ca(2+).

The protein belongs to the annexin (TC 1.A.31.1) family. Predominantly in developing fruit.

The protein is Annexin-like protein RJ4 of Fragaria ananassa (Strawberry).